A 614-amino-acid chain; its full sequence is Probable LRR receptor-like serine/threonine-protein kinase At5g45780 (614 aa).

The first 26 residues, 1–26 (MEISLMKFLFLGIWVYYYSVLDSVSA), serve as a signal peptide directing secretion. At 27-242 (MDSLLSPKGV…NSKHHSLVLS (216 aa)) the chain is on the extracellular side. LRR repeat units lie at residues 104-126 (HLHT…LGQL), 128-151 (ELET…GFLT), 152-174 (HLNY…VAGL), and 176-197 (GLSF…ISAK). Asn186, Asn193, and Asn224 each carry an N-linked (GlcNAc...) asparagine glycan. The chain crosses the membrane as a helical span at residues 243 to 263 (FAFGIVVAFIISLMFLFFWVL). Residues 264–614 (WHRSRLSRSH…IEAIELSGPR (351 aa)) lie on the Cytoplasmic side of the membrane. Thr297 is modified (phosphothreonine). In terms of domain architecture, Protein kinase spans 300 to 576 (FSPKNILGQG…QVLKVLEGLV (277 aa)). 306-314 (LGQGGFGMV) serves as a coordination point for ATP. A Phosphothreonine modification is found at Thr323. Position 328 (Lys328) interacts with ATP. Ser380 bears the Phosphoserine mark. Asp426 (proton acceptor) is an active-site residue. Residues Thr459, Thr460, and Thr465 each carry the phosphothreonine modification. Phosphotyrosine is present on Tyr473. Ser475 is subject to Phosphoserine. At Thr476 the chain carries Phosphothreonine. Ser480 bears the Phosphoserine mark. Thr555 carries the phosphothreonine modification.

It belongs to the protein kinase superfamily. Ser/Thr protein kinase family.

The protein localises to the membrane. It carries out the reaction L-seryl-[protein] + ATP = O-phospho-L-seryl-[protein] + ADP + H(+). The enzyme catalyses L-threonyl-[protein] + ATP = O-phospho-L-threonyl-[protein] + ADP + H(+). The chain is Probable LRR receptor-like serine/threonine-protein kinase At5g45780 from Arabidopsis thaliana (Mouse-ear cress).